We begin with the raw amino-acid sequence, 222 residues long: 7-cyano-7-deazaguanine synthase (222 aa).

8 to 18 is a binding site for ATP; it reads LSGGMDSTTAA. The Zn(2+) site is built by cysteine 187, cysteine 195, cysteine 198, and cysteine 201.

It belongs to the QueC family. Zn(2+) serves as cofactor.

It carries out the reaction 7-carboxy-7-deazaguanine + NH4(+) + ATP = 7-cyano-7-deazaguanine + ADP + phosphate + H2O + H(+). The protein operates within purine metabolism; 7-cyano-7-deazaguanine biosynthesis. Catalyzes the ATP-dependent conversion of 7-carboxy-7-deazaguanine (CDG) to 7-cyano-7-deazaguanine (preQ(0)). This is 7-cyano-7-deazaguanine synthase from Nautilia profundicola (strain ATCC BAA-1463 / DSM 18972 / AmH).